Here is a 503-residue protein sequence, read N- to C-terminus: MSENSTVKKNVRVRYAPSPTGFLHIGNAQSALFNYLFARHYHGTMVLRIEDTDVKRNVPHGEDSQIDNLHWLGIDWDEGPDKPNPKYAPYHQTERQDLYHRYITQLLDQGLAYKDYATEDELTTMRDQQRAAGEAPHYDGRWYGRSVADQQAAEARGLKPSIRLHLPANHEYAWDDIIKGHVAFNSDNMGGDFIIEKSNGMPTYNFAVVIDDYLMDITDVLRGDDHIANTPKQIAVYEALGLKHPNFGHITLIYNPKTRKKLSKRDKETLQFISQYKNQGYLSEAIFNFIAFLGWSPEGEDELFSREELIERYDPARMSKSPAYFDQSKLDWINAAYIKRLDLDDMTDRVLELVDEGQTDVARQVKALQLPDLRTLTSQVCKIYQTEIHQLSEIMDKVLFYVTILQEPLDYDQLRQFDRTATLAVLTAFRKHVQALPVDVATPDFKKMIQTVSQETGVTGRNLYFPLNVAFTGDHSAPQIDEVLRLFANSTIIELLTKAIAHV.

The short motif at P17–N27 is the 'HIGH' region element. A 'KMSKS' region motif is present at residues K261–R265. An ATP-binding site is contributed by K264.

Belongs to the class-I aminoacyl-tRNA synthetase family. Glutamate--tRNA ligase type 1 subfamily. Monomer.

It localises to the cytoplasm. It carries out the reaction tRNA(Glu) + L-glutamate + ATP = L-glutamyl-tRNA(Glu) + AMP + diphosphate. Functionally, catalyzes the attachment of glutamate to tRNA(Glu) in a two-step reaction: glutamate is first activated by ATP to form Glu-AMP and then transferred to the acceptor end of tRNA(Glu). The chain is Glutamate--tRNA ligase 1 from Levilactobacillus brevis (strain ATCC 367 / BCRC 12310 / CIP 105137 / JCM 1170 / LMG 11437 / NCIMB 947 / NCTC 947) (Lactobacillus brevis).